The following is a 571-amino-acid chain: Hemagglutinin-neuraminidase (571 aa).

The Intravirion segment spans residues 1–26 (MDRAVNRVVLENEEREAKNTWRLVFR). A helical transmembrane segment spans residues 27-47 (IAVLLLMVMTLAISAAALVYS). Residues 48–571 (MGASTPRDLA…LVEILKDDRV (524 aa)) are Virion surface-facing. A glycan (N-linked (GlcNAc...) asparagine; by host) is linked at Asn119. Positions 124–152 (GEPVHDPDYIGGIGKELIVDDISDVTSFY) are important for interaction with fusion/F protein. Cystine bridges form between Cys172/Cys196, Cys186/Cys247, and Cys238/Cys251. The involved in neuraminidase activity stretch occupies residues 234-239 (NRKSCS). Asn341 and Asn433 each carry an N-linked (GlcNAc...) asparagine; by host glycan. Intrachain disulfides connect Cys344/Cys461 and Cys455/Cys465. N-linked (GlcNAc...) asparagine; by host glycosylation is found at Asn481, Asn508, and Asn538. A disulfide bridge links Cys531 with Cys542.

Belongs to the paramyxoviruses hemagglutinin-neuraminidase family. As to quaternary structure, homotetramer; composed of disulfide-linked homodimers. Interacts with F protein trimer. Interacts with host CG-1B; this interaction inhibits viral adsorption and replication rather than internalization.

The protein resides in the virion membrane. It localises to the host cell membrane. The enzyme catalyses Hydrolysis of alpha-(2-&gt;3)-, alpha-(2-&gt;6)-, alpha-(2-&gt;8)- glycosidic linkages of terminal sialic acid residues in oligosaccharides, glycoproteins, glycolipids, colominic acid and synthetic substrates.. Functionally, mediates the viral entry into the host cell together with fusion/F protein. Attaches the virus to sialic acid-containing cell receptors and thereby initiates infection. Binding of HN protein to the receptor induces a conformational change that allows the F protein to trigger virion/cell membranes fusion. Its function is as follows. Neuraminidase activity ensures the efficient spread of the virus by dissociating the mature virions from the neuraminic acid containing glycoproteins. This Gallus gallus (Chicken) protein is Hemagglutinin-neuraminidase (HN).